The primary structure comprises 74 residues: Large ribosomal subunit protein uL29 (74 aa).

The protein belongs to the universal ribosomal protein uL29 family.

In Streptomyces griseus subsp. griseus (strain JCM 4626 / CBS 651.72 / NBRC 13350 / KCC S-0626 / ISP 5235), this protein is Large ribosomal subunit protein uL29.